The primary structure comprises 148 residues: Nucleoside diphosphate kinase (148 aa).

The ATP site is built by K10, F58, R86, T92, R103, and N113. The active-site Pros-phosphohistidine intermediate is H116.

Belongs to the NDK family. Mg(2+) serves as cofactor.

It localises to the cytoplasm. The enzyme catalyses a 2'-deoxyribonucleoside 5'-diphosphate + ATP = a 2'-deoxyribonucleoside 5'-triphosphate + ADP. It catalyses the reaction a ribonucleoside 5'-diphosphate + ATP = a ribonucleoside 5'-triphosphate + ADP. In terms of biological role, major role in the synthesis of nucleoside triphosphates other than ATP. The ATP gamma phosphate is transferred to the NDP beta phosphate via a ping-pong mechanism, using a phosphorylated active-site intermediate. The chain is Nucleoside diphosphate kinase from Thermoplasma acidophilum (strain ATCC 25905 / DSM 1728 / JCM 9062 / NBRC 15155 / AMRC-C165).